Here is a 198-residue protein sequence, read N- to C-terminus: 7-methyl-GTP pyrophosphatase (198 aa).

Aspartate 75 serves as the catalytic Proton acceptor.

It belongs to the Maf family. YceF subfamily. A divalent metal cation serves as cofactor.

It is found in the cytoplasm. It carries out the reaction N(7)-methyl-GTP + H2O = N(7)-methyl-GMP + diphosphate + H(+). Nucleoside triphosphate pyrophosphatase that hydrolyzes 7-methyl-GTP (m(7)GTP). May have a dual role in cell division arrest and in preventing the incorporation of modified nucleotides into cellular nucleic acids. This Bartonella quintana (strain Toulouse) (Rochalimaea quintana) protein is 7-methyl-GTP pyrophosphatase.